Reading from the N-terminus, the 691-residue chain is Elongation factor G (691 aa).

Residues 8–282 (ERVRNIGIAA…AVVDYLPAPV (275 aa)) enclose the tr-type G domain. GTP is bound by residues 17–24 (AHIDAGKT), 81–85 (DTPGH), and 135–138 (NKMD).

The protein belongs to the TRAFAC class translation factor GTPase superfamily. Classic translation factor GTPase family. EF-G/EF-2 subfamily.

The protein localises to the cytoplasm. Functionally, catalyzes the GTP-dependent ribosomal translocation step during translation elongation. During this step, the ribosome changes from the pre-translocational (PRE) to the post-translocational (POST) state as the newly formed A-site-bound peptidyl-tRNA and P-site-bound deacylated tRNA move to the P and E sites, respectively. Catalyzes the coordinated movement of the two tRNA molecules, the mRNA and conformational changes in the ribosome. The polypeptide is Elongation factor G (Prochlorococcus marinus (strain MIT 9515)).